The chain runs to 535 residues: 4-hydroxy-3-methylbut-2-enyl diphosphate reductase, apicoplast (535 aa).

C231 lines the [4Fe-4S] cluster pocket. The (2E)-4-hydroxy-3-methylbut-2-enyl diphosphate site is built by H260 and H293. Residues H260 and H293 each contribute to the dimethylallyl diphosphate site. Residues H260 and H293 each contribute to the isopentenyl diphosphate site. C315 is a binding site for [4Fe-4S] cluster. H343 contacts (2E)-4-hydroxy-3-methylbut-2-enyl diphosphate. A dimethylallyl diphosphate-binding site is contributed by H343. H343 serves as a coordination point for isopentenyl diphosphate. E345 functions as the Proton donor in the catalytic mechanism. T383 is a binding site for (2E)-4-hydroxy-3-methylbut-2-enyl diphosphate. C413 contacts [4Fe-4S] cluster. (2E)-4-hydroxy-3-methylbut-2-enyl diphosphate is bound by residues S441, S442, N443, and S485. Dimethylallyl diphosphate contacts are provided by S441, S442, N443, and S485. S441, S442, N443, and S485 together coordinate isopentenyl diphosphate.

This sequence belongs to the IspH family. As to quaternary structure, interacts with Fd/ferredoxin. [4Fe-4S] cluster is required as a cofactor.

The protein resides in the plastid. It localises to the apicoplast. It catalyses the reaction dimethylallyl diphosphate + 2 oxidized [2Fe-2S]-[ferredoxin] + H2O = (2E)-4-hydroxy-3-methylbut-2-enyl diphosphate + 2 reduced [2Fe-2S]-[ferredoxin] + 2 H(+). The catalysed reaction is isopentenyl diphosphate + 2 oxidized [2Fe-2S]-[ferredoxin] + H2O = (2E)-4-hydroxy-3-methylbut-2-enyl diphosphate + 2 reduced [2Fe-2S]-[ferredoxin] + 2 H(+). The protein operates within isoprenoid biosynthesis; dimethylallyl diphosphate biosynthesis; dimethylallyl diphosphate from (2E)-4-hydroxy-3-methylbutenyl diphosphate: step 1/1. It participates in isoprenoid biosynthesis; isopentenyl diphosphate biosynthesis via DXP pathway; isopentenyl diphosphate from 1-deoxy-D-xylulose 5-phosphate: step 6/6. In terms of biological role, catalyzes the conversion of 1-hydroxy-2-methyl-2-(E)-butenyl 4-diphosphate (HMBPP) into a mixture of isopentenyl diphosphate (IPP) and dimethylallyl diphosphate (DMAPP). Acts in the terminal step of the DOXP/MEP pathway for isoprenoid precursor biosynthesis. In Plasmodium falciparum (isolate 3D7), this protein is 4-hydroxy-3-methylbut-2-enyl diphosphate reductase, apicoplast.